We begin with the raw amino-acid sequence, 155 residues long: Myosin light chain alkali (155 aa).

EF-hand domains are found at residues 7–41 (REVENVEFVFEVMGSPGEGIDAVDLGDALRALNLN) and 80–115 (GCYEDFIECLKLYDKEENGTMLLAELQHALLALGES).

As to quaternary structure, myosin is a hexamer of 2 heavy chains and 4 light chains. As to expression, indirect flight muscle isoform is found only in the indirect flight muscles. The larval and adult isoform is present in the larval and adult musculature.

The polypeptide is Myosin light chain alkali (Mlc1) (Drosophila melanogaster (Fruit fly)).